A 526-amino-acid polypeptide reads, in one-letter code: Dolichyl pyrophosphate Glc1Man9GlcNAc2 alpha-1,3-glucosyltransferase (526 aa).

Transmembrane regions (helical) follow at residues Phe-4 to Leu-24, Leu-103 to His-122, Phe-143 to Phe-163, Gly-188 to Ala-208, Leu-238 to Ala-258, Pro-334 to Cys-354, Leu-368 to Ala-388, Val-389 to Leu-409, Leu-427 to Phe-449, Thr-461 to Thr-481, and Pro-488 to Leu-508.

Belongs to the ALG6/ALG8 glucosyltransferase family.

The protein localises to the endoplasmic reticulum membrane. It carries out the reaction an alpha-D-Glc-(1-&gt;3)-alpha-D-Man-(1-&gt;2)-alpha-D-Man-(1-&gt;2)-alpha-D-Man-(1-&gt;3)-[alpha-D-Man-(1-&gt;2)-alpha-D-Man-(1-&gt;3)-[alpha-D-Man-(1-&gt;2)-alpha-D-Man-(1-&gt;6)]-alpha-D-Man-(1-&gt;6)]-beta-D-Man-(1-&gt;4)-beta-D-GlcNAc-(1-&gt;4)-alpha-D-GlcNAc-diphospho-di-trans,poly-cis-dolichol + a di-trans,poly-cis-dolichyl beta-D-glucosyl phosphate = an alpha-D-Glc-(1-&gt;3)-alpha-D-Glc-(1-&gt;3)-alpha-D-Man-(1-&gt;2)-alpha-D-Man-(1-&gt;2)-alpha-D-Man-(1-&gt;3)-[alpha-D-Man-(1-&gt;2)-alpha-D-Man-(1-&gt;3)-[alpha-D-Man-(1-&gt;2)-alpha-D-Man-(1-&gt;6)]-alpha-D-Man-(1-&gt;6)]-beta-D-Man-(1-&gt;4)-beta-D-GlcNAc-(1-&gt;4)-alpha-D-GlcNAc-diphospho-di-trans,poly-cis-dolichol + a di-trans,poly-cis-dolichyl phosphate + H(+). It functions in the pathway protein modification; protein glycosylation. Functionally, dolichyl pyrophosphate Glc1Man9GlcNAc2 alpha-1,3-glucosyltransferase that operates in the biosynthetic pathway of dolichol-linked oligosaccharides, the glycan precursors employed in protein asparagine (N)-glycosylation. The assembly of dolichol-linked oligosaccharides begins on the cytosolic side of the endoplasmic reticulum membrane and finishes in its lumen. The sequential addition of sugars to dolichol pyrophosphate produces dolichol-linked oligosaccharides containing fourteen sugars, including two GlcNAcs, nine mannoses and three glucoses. Once assembled, the oligosaccharide is transferred from the lipid to nascent proteins by oligosaccharyltransferases. In the lumen of the endoplasmic reticulum, adds the second glucose residue from dolichyl phosphate glucose (Dol-P-Glc) onto the lipid-linked oligosaccharide intermediate Glc(1)Man(9)GlcNAc(2)-PP-Dol to produce Glc(2)Man(9)GlcNAc(2)-PP-Dol. Glc(2)Man(9)GlcNAc(2)-PP-Dol is a substrate for ALG10, the following enzyme in the biosynthetic pathway. Required for PKD1/Polycystin-1 maturation and localization to the plasma membrane of the primary cilia. This chain is Dolichyl pyrophosphate Glc1Man9GlcNAc2 alpha-1,3-glucosyltransferase, found in Bos taurus (Bovine).